The following is a 300-amino-acid chain: Formylmethanofuran--tetrahydromethanopterin formyltransferase-like protein (300 aa).

The protein belongs to the FTR family.

This Methanopyrus kandleri (strain AV19 / DSM 6324 / JCM 9639 / NBRC 100938) protein is Formylmethanofuran--tetrahydromethanopterin formyltransferase-like protein.